The chain runs to 148 residues: Ribonuclease H (148 aa).

The RNase H type-1 domain maps to 1 to 142; sequence MSDSVEMFTD…ADQLANRGVD (142 aa). Positions 10, 48, 70, and 134 each coordinate Mg(2+).

It belongs to the RNase H family. In terms of assembly, monomer. Mg(2+) is required as a cofactor.

The protein localises to the cytoplasm. It carries out the reaction Endonucleolytic cleavage to 5'-phosphomonoester.. Its function is as follows. Endonuclease that specifically degrades the RNA of RNA-DNA hybrids. This Pseudomonas putida (strain ATCC 700007 / DSM 6899 / JCM 31910 / BCRC 17059 / LMG 24140 / F1) protein is Ribonuclease H.